The chain runs to 463 residues: Protein MRG3-like (463 aa).

A helical membrane pass occupies residues 54-74; that stretch reads WVLSTGIVSFIAFNIWWVYWP. TPR repeat units lie at residues 84–118, 128–161, 358–389, and 409–442; these read KILR…CKAE, TGIE…FYNE, ELIR…ANEN, and SLAH…SEMI.

Belongs to the MGR3 family.

The protein resides in the membrane. This Saccharomyces cerevisiae (strain ATCC 204508 / S288c) (Baker's yeast) protein is Protein MRG3-like.